Consider the following 225-residue polypeptide: Phosphoserine phosphatase (225 aa).

Position 1 is an N-acetylmethionine (methionine 1). Aspartate 20 functions as the Nucleophile in the catalytic mechanism. Mg(2+) contacts are provided by aspartate 20 and aspartate 22. Aspartate 20 to aspartate 22 contributes to the L-serine binding site. Aspartate 22 (proton donor) is an active-site residue. Residue methionine 52 participates in O-phospho-L-serine binding. Glycine 53 lines the phosphate pocket. L-serine-binding positions include serine 109 to glycine 111 and lysine 158. O-phospho-L-serine contacts are provided by residues serine 109–glycine 111 and lysine 158. Residue aspartate 179 coordinates Mg(2+). Threonine 182 is a binding site for O-phospho-L-serine. Threonine 182 serves as a coordination point for phosphate.

The protein belongs to the HAD-like hydrolase superfamily. SerB family. As to quaternary structure, homodimer. It depends on Mg(2+) as a cofactor.

The protein localises to the cytoplasm. It localises to the cytosol. It carries out the reaction O-phospho-L-serine + H2O = L-serine + phosphate. The catalysed reaction is O-phospho-D-serine + H2O = D-serine + phosphate. Its pathway is amino-acid biosynthesis; L-serine biosynthesis; L-serine from 3-phospho-D-glycerate: step 3/3. In terms of biological role, catalyzes the last irreversible step in the biosynthesis of L-serine from carbohydrates, the dephosphorylation of O-phospho-L-serine to L-serine. L-serine can then be used in protein synthesis, to produce other amino acids, in nucleotide metabolism or in glutathione synthesis, or can be racemized to D-serine, a neuromodulator. May also act on O-phospho-D-serine. The sequence is that of Phosphoserine phosphatase from Rattus norvegicus (Rat).